We begin with the raw amino-acid sequence, 268 residues long: tRNA pseudouridine synthase A (268 aa).

Catalysis depends on Asp-52, which acts as the Nucleophile. A substrate-binding site is contributed by Tyr-110.

Belongs to the tRNA pseudouridine synthase TruA family. Homodimer.

The catalysed reaction is uridine(38/39/40) in tRNA = pseudouridine(38/39/40) in tRNA. Its function is as follows. Formation of pseudouridine at positions 38, 39 and 40 in the anticodon stem and loop of transfer RNAs. The polypeptide is tRNA pseudouridine synthase A (Prochlorococcus marinus (strain MIT 9215)).